A 390-amino-acid polypeptide reads, in one-letter code: Galactokinase (390 aa).

Substrate is bound at residue 33-36 (EHTD). Residues S67 and 124-130 (GAGLSSS) each bind ATP. Mg(2+)-binding residues include S130 and E162. Catalysis depends on D174, which acts as the Proton acceptor. Residue Y224 coordinates substrate.

It belongs to the GHMP kinase family. GalK subfamily.

The protein localises to the cytoplasm. The enzyme catalyses alpha-D-galactose + ATP = alpha-D-galactose 1-phosphate + ADP + H(+). Its pathway is carbohydrate metabolism; galactose metabolism. In terms of biological role, catalyzes the transfer of the gamma-phosphate of ATP to D-galactose to form alpha-D-galactose-1-phosphate (Gal-1-P). This Bacillus subtilis (strain 168) protein is Galactokinase.